Reading from the N-terminus, the 169-residue chain is Flagellar biosynthetic protein FliU (169 aa).

This sequence belongs to the FliB family.

Required for the secretion of flagellin and expression of motility. This Salmonella muenchen protein is Flagellar biosynthetic protein FliU (fliU).